The following is a 520-amino-acid chain: Maturase K (520 aa).

The protein belongs to the intron maturase 2 family. MatK subfamily.

It localises to the plastid. The protein localises to the chloroplast. Its function is as follows. Usually encoded in the trnK tRNA gene intron. Probably assists in splicing its own and other chloroplast group II introns. This Ruscus aculeatus (Butcher's broom) protein is Maturase K.